Consider the following 1879-residue polypeptide: Protein TIC 214 (1879 aa).

6 helical membrane-spanning segments follow: residues 18-38 (IINS…FSIG), 67-87 (FITG…HLAL), 90-110 (PHTI…WNNH), 127-147 (LSIQ…HFIL), 175-195 (VGWL…LVWI), and 218-238 (IFSI…PSPI). The interval 243–291 (LKETEERGESEEERDVEKTSETKGTKQEQEGSTEEDPSPSLFSEEKEDP) is disordered. Positions 257 to 271 (DVEKTSETKGTKQEQ) are enriched in basic and acidic residues.

Belongs to the TIC214 family. In terms of assembly, part of the Tic complex.

It localises to the plastid. The protein localises to the chloroplast inner membrane. In terms of biological role, involved in protein precursor import into chloroplasts. May be part of an intermediate translocation complex acting as a protein-conducting channel at the inner envelope. This Morus indica (Mulberry) protein is Protein TIC 214.